Here is a 407-residue protein sequence, read N- to C-terminus: Putative polysaccharide ligase RF_0568 (407 aa).

Transmembrane regions (helical) follow at residues 15–35 (LGMV…LMLF), 71–91 (MTIK…LFAI), 100–120 (FIQV…VPFG), 129–149 (LILG…SHGF), 166–186 (GCAL…SSGK), 203–223 (ISDS…FILA), 229–249 (IFFK…PVIA), 272–292 (LFIW…GYGF), 324–344 (ILQI…CLVY), and 379–399 (IWQI…KLLV).

Belongs to the O-antigen ligase family.

The protein resides in the membrane. This Rickettsia felis (strain ATCC VR-1525 / URRWXCal2) (Rickettsia azadi) protein is Putative polysaccharide ligase RF_0568.